The chain runs to 86 residues: Cell division topological specificity factor (86 aa).

The protein belongs to the MinE family.

Its function is as follows. Prevents the cell division inhibition by proteins MinC and MinD at internal division sites while permitting inhibition at polar sites. This ensures cell division at the proper site by restricting the formation of a division septum at the midpoint of the long axis of the cell. This chain is Cell division topological specificity factor, found in Shewanella woodyi (strain ATCC 51908 / MS32).